The following is a 245-amino-acid chain: Fibroblast growth factor 3 (245 aa).

Positions 1–17 (MGLIWLLLLSLLEPSWP) are cleaved as a signal peptide. N65 carries N-linked (GlcNAc...) asparagine glycosylation. Disordered stretches follow at residues 137–181 (GSSG…FLPR) and 195–245 (QSSQ…LAVA). The segment covering 161-173 (GRPRRGFKTRRTQ) has biased composition (basic residues). The segment covering 226-238 (TLSTRATPSTQLH) has biased composition (polar residues).

Belongs to the heparin-binding growth factors family. Interacts with FGFR1 and FGFR2. Affinity between fibroblast growth factors (FGFs) and their receptors is increased by heparan sulfate glycosaminoglycans that function as coreceptors. Post-translationally, glycosylated.

It localises to the nucleus. It is found in the endoplasmic reticulum. The protein resides in the golgi apparatus. Its function is as follows. Plays an important role in the regulation of embryonic development, cell proliferation, and cell differentiation. Required for normal ear development. The chain is Fibroblast growth factor 3 (Fgf3) from Mus musculus (Mouse).